Consider the following 60-residue polypeptide: Large ribosomal subunit protein bL32 (60 aa).

The span at 1–16 (MAVPRNRHSNARKNIR) shows a compositional bias: basic residues. A disordered region spans residues 1–20 (MAVPRNRHSNARKNIRRSHD).

It belongs to the bacterial ribosomal protein bL32 family.

The polypeptide is Large ribosomal subunit protein bL32 (rpmF) (Chlamydia pneumoniae (Chlamydophila pneumoniae)).